The sequence spans 504 residues: Cystathionine beta-synthase (504 aa).

Positions 12 and 23 each coordinate heme. Lysine 78 is subject to N6-(pyridoxal phosphate)lysine. Residues asparagine 108, 215–219, and serine 307 contribute to the pyridoxal 5'-phosphate site; that span reads GTGGT. CBS domains are found at residues 375–434 and 442–498; these read LSFD…IVKC and MVKQ…NGTS.

It belongs to the cysteine synthase/cystathionine beta-synthase family. Homodimer. Pyridoxal 5'-phosphate serves as cofactor.

It catalyses the reaction L-homocysteine + L-serine = L,L-cystathionine + H2O. Its pathway is amino-acid biosynthesis; L-cysteine biosynthesis; L-cysteine from L-homocysteine and L-serine: step 1/2. With respect to regulation, has no response to S-adenosyl-methionine/AdoMet, unlike mammalian orthologs. Binds non-covalently to a heme group that may control the redox sensitivity of the enzyme. Its function is as follows. Hydro-lyase catalyzing the first step of the transsulfuration pathway, where the hydroxyl group of L-serine is displaced by L-homocysteine in a beta-replacement reaction to form L-cystathionine, the precursor of L-cysteine. The protein is Cystathionine beta-synthase of Apis mellifera (Honeybee).